The chain runs to 215 residues: Probable phosphoglycerate mutase GpmB (215 aa).

Substrate contacts are provided by residues 8-15 (RHGETQWN), 21-22 (QG), Arg58, Lys60, 82-85 (ELDM), 104-105 (RR), and 151-152 (GI). Residue His9 is the Tele-phosphohistidine intermediate of the active site. Glu82 (proton donor/acceptor) is an active-site residue.

Belongs to the phosphoglycerate mutase family. GpmB subfamily.

The catalysed reaction is (2R)-2-phosphoglycerate = (2R)-3-phosphoglycerate. The protein operates within carbohydrate degradation; glycolysis; pyruvate from D-glyceraldehyde 3-phosphate: step 3/5. The polypeptide is Probable phosphoglycerate mutase GpmB (Salmonella typhi).